Reading from the N-terminus, the 984-residue chain is Serine/threonine-protein kinase N2 (984 aa).

Position 21 is a phosphoserine (Ser21). The region spanning 33 to 109 (KLDFSDTMVQ…LQELNAHIVV (77 aa)) is the REM-1 1 domain. Residue Lys77 is modified to N6-acetyllysine. Ser110 bears the Phosphoserine mark. Positions 114–133 (DITDCPRTPDTPNNDPRCST) are disordered. Phosphothreonine is present on residues Thr121 and Thr124. REM-1 domains are found at residues 121 to 203 (TPDT…TNEL) and 204 to 284 (AFDN…EVPK). Positions 123 to 133 (DTPNNDPRCST) are enriched in polar residues. A phosphoserine mark is found at Ser302, Ser306, Ser360, and Ser362. Residues 351–383 (ATSVALPGWSPSETRSSFMSRTSKSKSGSSRNL) form a disordered region. One can recognise a C2 domain in the interval 353-473 (SVALPGWSPS…LYLEPQGTLF (121 aa)). Residues 364–381 (TRSSFMSRTSKSKSGSSR) are compositionally biased toward low complexity. The necessary to rescue apical junction formation stretch occupies residues 382–463 (NLLKTDDLSN…FLDNQRHGMC (82 aa)). Ser535, Ser583, and Ser620 each carry phosphoserine. The tract at residues 558 to 584 (ASDSTVTKLDFDLEPEPPPAPPRASSL) is disordered. At Thr628 the chain carries Phosphothreonine. Ser631 bears the Phosphoserine mark. The Protein kinase domain occupies 657–916 (FRCCAVLGRG…AEDVKKHPFF (260 aa)). ATP is bound by residues 663–671 (LGRGHFGKV) and Lys686. The active-site Proton acceptor is Asp782. Thr816 carries the post-translational modification Phosphothreonine; by PDPK1. Positions 917–977 (RLIDWSALMD…EEEQEMFRDF (61 aa)) are necessary for the catalytic activity. Positions 917–984 (RLIDWSALMD…RDFDYIADWC (68 aa)) constitute an AGC-kinase C-terminal domain. Ser952 is modified (phosphoserine). Residue Thr958 is modified to Phosphothreonine. The interval 978–984 (DYIADWC) is negatively regulates the responsiveness of the catalytic activity by cardiolipin and is required for optimal activation by the GTP-bound RhoA.

Belongs to the protein kinase superfamily. AGC Ser/Thr protein kinase family. PKC subfamily. Interacts (via the REM repeats) with RHOA (GTP-bound form preferentially) and interacts (via the REM repeats) with RAC1 (GTP-bound form preferentially); the interactions induce its autophosphorylation. Interacts with RHOC. Interacts with NCK1 and NCK2. Interacts with NCK1 (via SH3 domains). Interacts with CD44. Interacts (via C-terminal kinase domain) with PDPK1; the interaction stimulates PDPK1 kinase activity. Interacts with MAP3K2; the interaction activates PRK2 kinase activity in a MAP3K2-independent kinase activity. Interacts (via C-terminal domain) with AKT1; the interaction occurs with the C-terminal cleavage product of PRK2 in apoptotic cells. Interacts (via C-terminus) with PTPN13 (via PDZ 3 domain). Interacts with CDK10. In terms of assembly, (Microbial infection) Interacts with HCV NS5B (via N-terminal finger domain). Post-translationally, autophosphorylated. Phosphorylated during mitosis. Phosphorylated by CDK10. In terms of processing, activated by limited proteolysis with trypsin. Proteolytically cleaved by caspase-3 during the induction of apoptotic cell death. In terms of tissue distribution, ubiquitous. Expressed in numerous tumor cell lines, especially in bladder tumor cells.

It localises to the cytoplasm. Its subcellular location is the nucleus. It is found in the membrane. The protein resides in the cell projection. The protein localises to the lamellipodium. It localises to the cytoskeleton. Its subcellular location is the cleavage furrow. It is found in the midbody. The protein resides in the cell junction. The catalysed reaction is L-seryl-[protein] + ATP = O-phospho-L-seryl-[protein] + ADP + H(+). It catalyses the reaction L-threonyl-[protein] + ATP = O-phospho-L-threonyl-[protein] + ADP + H(+). Its activity is regulated as follows. Kinase activity is activated upon binding to GTP-bound Rhoa/Rac1 GTPases. Activated by caspase-3 (CASP3) cleavage during apoptosis. Activated by lipids, particularly cardiolipin and to a lesser extent by other acidic phospholipids and unsaturated fatty acids. Two specific sites, Thr-816 (activation loop of the kinase domain) and Thr-958 (turn motif), need to be phosphorylated for its full activation. Its function is as follows. PKC-related serine/threonine-protein kinase and Rho/Rac effector protein that participates in specific signal transduction responses in the cell. Plays a role in the regulation of cell cycle progression, actin cytoskeleton assembly, cell migration, cell adhesion, tumor cell invasion and transcription activation signaling processes. Phosphorylates CTTN in hyaluronan-induced astrocytes and hence decreases CTTN ability to associate with filamentous actin. Phosphorylates HDAC5, therefore lead to impair HDAC5 import. Direct RhoA target required for the regulation of the maturation of primordial junctions into apical junction formation in bronchial epithelial cells. Required for G2/M phases of the cell cycle progression and abscission during cytokinesis in a ECT2-dependent manner. Stimulates FYN kinase activity that is required for establishment of skin cell-cell adhesion during keratinocytes differentiation. Regulates epithelial bladder cells speed and direction of movement during cell migration and tumor cell invasion. Inhibits Akt pro-survival-induced kinase activity. Mediates Rho protein-induced transcriptional activation via the c-fos serum response factor (SRF). Involved in the negative regulation of ciliogenesis. In terms of biological role, (Microbial infection) Phosphorylates HCV NS5B leading to stimulation of HCV RNA replication. The chain is Serine/threonine-protein kinase N2 (PKN2) from Homo sapiens (Human).